We begin with the raw amino-acid sequence, 245 residues long: Ureidoacrylate amidohydrolase RutB (245 aa).

Residue D38 is the Proton acceptor of the active site. K147 is an active-site residue. C180 acts as the Nucleophile in catalysis.

The protein belongs to the isochorismatase family. RutB subfamily.

It catalyses the reaction (Z)-3-ureidoacrylate + H2O + H(+) = (Z)-3-aminoacrylate + NH4(+) + CO2. It carries out the reaction (Z)-3-ureidoacrylate + H2O = (Z)-3-aminoacrylate + carbamate + H(+). The enzyme catalyses (Z)-2-methylureidoacrylate + H2O + H(+) = (Z)-2-methylaminoacrylate + NH4(+) + CO2. Functionally, hydrolyzes ureidoacrylate to form aminoacrylate and carbamate. The carbamate hydrolyzes spontaneously, thereby releasing one of the nitrogen atoms of the pyrimidine ring as ammonia and one of its carbon atoms as CO2. This chain is Ureidoacrylate amidohydrolase RutB, found in Acinetobacter baylyi (strain ATCC 33305 / BD413 / ADP1).